Reading from the N-terminus, the 275-residue chain is Trypsin-4 (275 aa).

An N-terminal signal peptide occupies residues 1–18 (MSNKITILLAVLLAVVAC). The propeptide at 19 to 48 (AQAHASHQRRVPYPLPRFLPRPHHTVSNHR) is activation peptide. In terms of domain architecture, Peptidase S1 spans 49–274 (IVGGFEIDVA…VRDWIRETCG (226 aa)). Cys-74 and Cys-90 are joined by a disulfide. Active-site charge relay system residues include His-89 and Asp-134. 2 cysteine pairs are disulfide-bonded: Cys-199–Cys-215 and Cys-226–Cys-250. Catalysis depends on Ser-230, which acts as the Charge relay system.

This sequence belongs to the peptidase S1 family. As to expression, expressed in the midgut. Expression levels drop a few hours after blood feeding and pick up again 28 hours later.

The protein localises to the secreted. The catalysed reaction is Preferential cleavage: Arg-|-Xaa, Lys-|-Xaa.. Its function is as follows. Constitutive trypsin that is expressed 2 days after emergence, coinciding with host seeking behavior of the female. The polypeptide is Trypsin-4 (TRYP4) (Anopheles gambiae (African malaria mosquito)).